The sequence spans 309 residues: Olfactory receptor 8U1 (309 aa).

Topologically, residues 1–25 (MAHINCTQATEFILVGLTDHQELKM) are extracellular. A glycan (N-linked (GlcNAc...) asparagine) is linked at Asn5. The helical transmembrane segment at 26 to 46 (PLFVLFLSIYLFTVVGNLGLI) threads the bilayer. The Cytoplasmic portion of the chain corresponds to 47-54 (LLIRADTS). A helical membrane pass occupies residues 55–75 (LNTPMYFFLSNLAFVDFCYSS). Over 76-99 (VITPKMLGNFLYKQNVISFDACAT) the chain is Extracellular. Cys97 and Cys189 are disulfide-bonded. The helical transmembrane segment at 100 to 120 (QLGCFLTFMISESLLLASMAY) threads the bilayer. Topologically, residues 121 to 139 (DRYVAICNPLLYMVVMTPG) are cytoplasmic. Residues 140-160 (ICIQLVAVPYSYSFLMALFHT) traverse the membrane as a helical segment. Over 161-197 (ILTFRLSYCHSNIVNHFYCDDMPLLRLTCSDTRFKQL) the chain is Extracellular. A helical transmembrane segment spans residues 198–217 (WIFACAGIMFISSLLIVFVS). At 218–237 (YMFIISAILRMHSAEGRQKA) the chain is on the cytoplasmic side. The chain crosses the membrane as a helical span at residues 238–258 (FSTCGSHMLAVTIFYGTLIFM). The Extracellular portion of the chain corresponds to 259-271 (YLQPSSSHALDTD). Residues 272 to 292 (KMASVFYTVIIPMLNPLIYSL) traverse the membrane as a helical segment. The Cytoplasmic segment spans residues 293–309 (QNKEVKEALKKIIINKN).

It belongs to the G-protein coupled receptor 1 family.

The protein resides in the cell membrane. Its function is as follows. Odorant receptor. This chain is Olfactory receptor 8U1 (OR8U1), found in Homo sapiens (Human).